Consider the following 145-residue polypeptide: Large ribosomal subunit protein uL11 (145 aa).

Belongs to the universal ribosomal protein uL11 family. In terms of assembly, part of the ribosomal stalk of the 50S ribosomal subunit. Interacts with L10 and the large rRNA to form the base of the stalk. L10 forms an elongated spine to which L12 dimers bind in a sequential fashion forming a multimeric L10(L12)X complex. One or more lysine residues are methylated.

In terms of biological role, forms part of the ribosomal stalk which helps the ribosome interact with GTP-bound translation factors. This chain is Large ribosomal subunit protein uL11, found in Coxiella burnetii (strain CbuK_Q154) (Coxiella burnetii (strain Q154)).